Consider the following 448-residue polypeptide: Glucose-6-phosphate isomerase (448 aa).

Catalysis depends on Glu290, which acts as the Proton donor. Residues His311 and Lys425 contribute to the active site.

The protein belongs to the GPI family.

The protein resides in the cytoplasm. The enzyme catalyses alpha-D-glucose 6-phosphate = beta-D-fructose 6-phosphate. The protein operates within carbohydrate biosynthesis; gluconeogenesis. It functions in the pathway carbohydrate degradation; glycolysis; D-glyceraldehyde 3-phosphate and glycerone phosphate from D-glucose: step 2/4. Its function is as follows. Catalyzes the reversible isomerization of glucose-6-phosphate to fructose-6-phosphate. This Lactococcus lactis subsp. lactis (strain IL1403) (Streptococcus lactis) protein is Glucose-6-phosphate isomerase.